The following is a 208-amino-acid chain: Large ribosomal subunit protein eL13 (208 aa).

Ser-177 and Ser-180 each carry phosphoserine.

This sequence belongs to the eukaryotic ribosomal protein eL13 family. Component of the large ribosomal subunit (LSU). Mature yeast ribosomes consist of a small (40S) and a large (60S) subunit. The 40S small subunit contains 1 molecule of ribosomal RNA (18S rRNA) and at least 33 different proteins. The large 60S subunit contains 3 rRNA molecules (25S, 5.8S and 5S rRNA) and at least 46 different proteins.

The protein localises to the cytoplasm. In terms of biological role, component of the ribosome, a large ribonucleoprotein complex responsible for the synthesis of proteins in the cell. The small ribosomal subunit (SSU) binds messenger RNAs (mRNAs) and translates the encoded message by selecting cognate aminoacyl-transfer RNA (tRNA) molecules. The large subunit (LSU) contains the ribosomal catalytic site termed the peptidyl transferase center (PTC), which catalyzes the formation of peptide bonds, thereby polymerizing the amino acids delivered by tRNAs into a polypeptide chain. The nascent polypeptides leave the ribosome through a tunnel in the LSU and interact with protein factors that function in enzymatic processing, targeting, and the membrane insertion of nascent chains at the exit of the ribosomal tunnel. In Schizosaccharomyces pombe (strain 972 / ATCC 24843) (Fission yeast), this protein is Large ribosomal subunit protein eL13 (rpl13).